The chain runs to 95 residues: Homeotic protein bicoid (95 aa).

Disordered stretches follow at residues Asn1 to Met29 and Gly42 to Asp63.

Belongs to the paired homeobox family. Bicoid subfamily.

Its subcellular location is the nucleus. Bicoid is polarity protein that provides positional cues for the development of head and thoracic segments. BCD regulates the expression of zygotic genes, possibly through its homeodomain, and inhibits the activity of other maternal gene products. The chain is Homeotic protein bicoid (bcd) from Drosophila subobscura (Fruit fly).